A 142-amino-acid polypeptide reads, in one-letter code: Nucleoside diphosphate kinase (142 aa).

Residues Lys-11, Phe-59, Arg-87, Thr-93, Arg-104, and Asn-114 each contribute to the ATP site. His-117 (pros-phosphohistidine intermediate) is an active-site residue.

It belongs to the NDK family. As to quaternary structure, homotetramer. The cofactor is Mg(2+).

The protein resides in the cytoplasm. It catalyses the reaction a 2'-deoxyribonucleoside 5'-diphosphate + ATP = a 2'-deoxyribonucleoside 5'-triphosphate + ADP. The enzyme catalyses a ribonucleoside 5'-diphosphate + ATP = a ribonucleoside 5'-triphosphate + ADP. In terms of biological role, major role in the synthesis of nucleoside triphosphates other than ATP. The ATP gamma phosphate is transferred to the NDP beta phosphate via a ping-pong mechanism, using a phosphorylated active-site intermediate. This is Nucleoside diphosphate kinase from Marinobacter nauticus (strain ATCC 700491 / DSM 11845 / VT8) (Marinobacter aquaeolei).